The primary structure comprises 190 residues: Large ribosomal subunit protein uL22 (190 aa).

The segment at 111–190 is disordered; sequence SVQSTKAKAK…TKKKTEGEEK (80 aa). Residues 125–147 are compositionally biased toward basic and acidic residues; the sequence is IKSEDSKNSLKVTESKADSKVDA. Residues 167-178 show a composition bias toward low complexity; sequence AKVATTKSTATR.

It belongs to the universal ribosomal protein uL22 family. As to quaternary structure, part of the 50S ribosomal subunit.

Its function is as follows. This protein binds specifically to 23S rRNA; its binding is stimulated by other ribosomal proteins, e.g. L4, L17, and L20. It is important during the early stages of 50S assembly. It makes multiple contacts with different domains of the 23S rRNA in the assembled 50S subunit and ribosome. In terms of biological role, the globular domain of the protein is located near the polypeptide exit tunnel on the outside of the subunit, while an extended beta-hairpin is found that lines the wall of the exit tunnel in the center of the 70S ribosome. The chain is Large ribosomal subunit protein uL22 from Helicobacter hepaticus (strain ATCC 51449 / 3B1).